Consider the following 546-residue polypeptide: Chaperonin GroEL (546 aa).

ATP is bound by residues 29-32, Lys-50, 86-90, Gly-414, and Asp-492; these read TMGP and DGTTT.

This sequence belongs to the chaperonin (HSP60) family. In terms of assembly, forms a cylinder of 14 subunits composed of two heptameric rings stacked back-to-back. Interacts with the co-chaperonin GroES.

It localises to the cytoplasm. The enzyme catalyses ATP + H2O + a folded polypeptide = ADP + phosphate + an unfolded polypeptide.. In terms of biological role, together with its co-chaperonin GroES, plays an essential role in assisting protein folding. The GroEL-GroES system forms a nano-cage that allows encapsulation of the non-native substrate proteins and provides a physical environment optimized to promote and accelerate protein folding. This chain is Chaperonin GroEL, found in Helicobacter pylori (strain G27).